Here is a 320-residue protein sequence, read N- to C-terminus: Fructose-1,6-bisphosphatase class 1 (320 aa).

Mg(2+) contacts are provided by glutamate 93, aspartate 114, leucine 116, and aspartate 117. Substrate is bound by residues 117-120 (DGSS), tyrosine 225, and lysine 256. Glutamate 262 contributes to the Mg(2+) binding site.

This sequence belongs to the FBPase class 1 family. As to quaternary structure, homotetramer. The cofactor is Mg(2+).

It is found in the cytoplasm. The catalysed reaction is beta-D-fructose 1,6-bisphosphate + H2O = beta-D-fructose 6-phosphate + phosphate. Its pathway is carbohydrate biosynthesis; gluconeogenesis. The protein is Fructose-1,6-bisphosphatase class 1 of Syntrophotalea carbinolica (strain DSM 2380 / NBRC 103641 / GraBd1) (Pelobacter carbinolicus).